The primary structure comprises 379 residues: Queuine tRNA-ribosyltransferase (379 aa).

The Proton acceptor role is filled by Asp-91. Residues 91-95, Asp-145, Gln-189, and Gly-216 contribute to the substrate site; that span reads DSGGF. Positions 247–253 are RNA binding; the sequence is GVGKPED. The active-site Nucleophile is the Asp-266. The interval 271–275 is RNA binding; important for wobble base 34 recognition; it reads TRNAR. Residues Cys-304, Cys-306, Cys-309, and His-335 each contribute to the Zn(2+) site.

Belongs to the queuine tRNA-ribosyltransferase family. Homodimer. Within each dimer, one monomer is responsible for RNA recognition and catalysis, while the other monomer binds to the replacement base PreQ1. The cofactor is Zn(2+).

It catalyses the reaction 7-aminomethyl-7-carbaguanine + guanosine(34) in tRNA = 7-aminomethyl-7-carbaguanosine(34) in tRNA + guanine. It functions in the pathway tRNA modification; tRNA-queuosine biosynthesis. Functionally, catalyzes the base-exchange of a guanine (G) residue with the queuine precursor 7-aminomethyl-7-deazaguanine (PreQ1) at position 34 (anticodon wobble position) in tRNAs with GU(N) anticodons (tRNA-Asp, -Asn, -His and -Tyr). Catalysis occurs through a double-displacement mechanism. The nucleophile active site attacks the C1' of nucleotide 34 to detach the guanine base from the RNA, forming a covalent enzyme-RNA intermediate. The proton acceptor active site deprotonates the incoming PreQ1, allowing a nucleophilic attack on the C1' of the ribose to form the product. After dissociation, two additional enzymatic reactions on the tRNA convert PreQ1 to queuine (Q), resulting in the hypermodified nucleoside queuosine (7-(((4,5-cis-dihydroxy-2-cyclopenten-1-yl)amino)methyl)-7-deazaguanosine). The protein is Queuine tRNA-ribosyltransferase of Vibrio cholerae serotype O1 (strain ATCC 39315 / El Tor Inaba N16961).